Reading from the N-terminus, the 120-residue chain is ESAT-6-like protein EsxQ (120 aa).

The protein belongs to the WXG100 family. ESAT-6 subfamily.

The protein localises to the secreted. The chain is ESAT-6-like protein EsxQ from Mycobacterium bovis (strain ATCC BAA-935 / AF2122/97).